Here is a 423-residue protein sequence, read N- to C-terminus: MAKKNGTSWFTAVKKILWSPSKDSDKKTHHHKETDIKRKEKKGWIFRKTKLETTNSVLQHTVRTVEAEEKEKPPVIVSSVEEGVTEIVKLTATPGFIRRHWAAIIIQTAFRGYLSRRALRALKGIVKLQALVRGNNVRNQAKLTLRCIKALVRVQDQVLNHHQQQRSRVLLSPPSRNYNIEARRNSMFAESNGFWDTKTYLQDIRSRRSLSRDMNRCNNEFYSEETELILQKKLEIAIKREKAQALALSNQIRSRSSRNQSAGDDRELLERTQWLDRWMATKQWDDTITNSTNVRDPIKTLEAVTTHHHQRSYPATPPSCRASRSVMVRSASPRIPCSPSSMQPNYMSATESAKAKARTQSTPRRRPMTAKKRLCYAEEESLRSPSFKSCLWGDHESDYSCCYGDGFAGKISPCSTTELRWLK.

IQ domains lie at 99–127 (RHWA…GIVK) and 128–150 (LQAL…CIKA). Residues 231 to 251 (QKKLEIAIKREKAQALALSNQ) are a coiled coil. Residues 235–252 (EIAIKREKAQALALSNQI) are calmodulin-binding.

Belongs to the IQD family. In terms of assembly, binds to multiple calmodulin (CaM) in the presence of Ca(2+) and CaM-like proteins.

The protein localises to the cytoplasm. It is found in the cytoskeleton. It localises to the cell membrane. Functionally, may be involved in cooperative interactions with calmodulins or calmodulin-like proteins. Recruits calmodulin proteins to microtubules, thus being a potential scaffold in cellular signaling and trafficking. Regulates cell shape and elongation in aerial organs (i.e. cotyledons, leaves, and hypocotyls) probably by regulating cortical microtubules (MT) arrays orientation. May associate with nucleic acids and regulate gene expression at the transcriptional or post-transcriptional level. This is Protein IQ-DOMAIN 16 from Arabidopsis thaliana (Mouse-ear cress).